The chain runs to 322 residues: Quinolinate synthase (322 aa).

Iminosuccinate-binding residues include His37 and Ser54. Cys99 serves as a coordination point for [4Fe-4S] cluster. Iminosuccinate-binding positions include 125 to 127 and Ser142; that span reads YVN. Cys185 lines the [4Fe-4S] cluster pocket. Iminosuccinate-binding positions include 211–213 and Thr228; that span reads HPE. A [4Fe-4S] cluster-binding site is contributed by Cys278.

This sequence belongs to the quinolinate synthase family. Type 2 subfamily. [4Fe-4S] cluster is required as a cofactor.

The protein resides in the cytoplasm. The catalysed reaction is iminosuccinate + dihydroxyacetone phosphate = quinolinate + phosphate + 2 H2O + H(+). It participates in cofactor biosynthesis; NAD(+) biosynthesis; quinolinate from iminoaspartate: step 1/1. Functionally, catalyzes the condensation of iminoaspartate with dihydroxyacetone phosphate to form quinolinate. This chain is Quinolinate synthase, found in Chlorobaculum tepidum (strain ATCC 49652 / DSM 12025 / NBRC 103806 / TLS) (Chlorobium tepidum).